Here is a 156-residue protein sequence, read N- to C-terminus: Large ribosomal subunit protein uL15 (156 aa).

The tract at residues 25–49 (RGIGCGKGKTSGRGHKGQKARSGTS) is disordered. Residues 34 to 43 (TSGRGHKGQK) are compositionally biased toward basic residues.

Belongs to the universal ribosomal protein uL15 family. In terms of assembly, part of the 50S ribosomal subunit.

Functionally, binds to the 23S rRNA. The protein is Large ribosomal subunit protein uL15 of Wolbachia sp. subsp. Brugia malayi (strain TRS).